Consider the following 285-residue polypeptide: Probable endonuclease 4 (285 aa).

His69, His109, Glu145, Asp179, His182, His216, Asp229, His231, and Glu261 together coordinate Zn(2+).

Belongs to the AP endonuclease 2 family. Zn(2+) serves as cofactor.

The enzyme catalyses Endonucleolytic cleavage to 5'-phosphooligonucleotide end-products.. Functionally, endonuclease IV plays a role in DNA repair. It cleaves phosphodiester bonds at apurinic or apyrimidinic (AP) sites, generating a 3'-hydroxyl group and a 5'-terminal sugar phosphate. This is Probable endonuclease 4 from Shigella boydii serotype 4 (strain Sb227).